The primary structure comprises 468 residues: Ribulose bisphosphate carboxylase large chain (468 aa).

The residue at position 7 (Lys-7) is an N6,N6,N6-trimethyllysine. Positions 116 and 166 each coordinate substrate. The Proton acceptor role is filled by Lys-168. A substrate-binding site is contributed by Lys-170. 3 residues coordinate Mg(2+): Lys-194, Asp-196, and Glu-197. The residue at position 194 (Lys-194) is an N6-carboxylysine. His-287 serves as the catalytic Proton acceptor. Substrate-binding residues include Arg-288, His-320, and Ser-372.

It belongs to the RuBisCO large chain family. Type I subfamily. In terms of assembly, heterohexadecamer of 8 large chains and 8 small chains. Requires Mg(2+) as cofactor.

The protein resides in the plastid. The protein localises to the chloroplast. It catalyses the reaction 2 (2R)-3-phosphoglycerate + 2 H(+) = D-ribulose 1,5-bisphosphate + CO2 + H2O. The enzyme catalyses D-ribulose 1,5-bisphosphate + O2 = 2-phosphoglycolate + (2R)-3-phosphoglycerate + 2 H(+). Functionally, ruBisCO catalyzes two reactions: the carboxylation of D-ribulose 1,5-bisphosphate, the primary event in carbon dioxide fixation, as well as the oxidative fragmentation of the pentose substrate in the photorespiration process. Both reactions occur simultaneously and in competition at the same active site. The polypeptide is Ribulose bisphosphate carboxylase large chain (Couroupita guianensis (Cannonball tree)).